A 471-amino-acid polypeptide reads, in one-letter code: MENFKHLPEPFRIRVIEPVKRTTRAYREEAIIKSGMNPFLLDSEDVFIDLLTDSGTGAVTQSMQAAMMRGDEAYSGSRSYYALAESVKNIFGYQYTIPTHQGRGAEQIYIPVLIKKREQEKGLDRSKMVAFSNYFFDTTQGHSQINGCTVRNVYIKEAFDTGVRYDFKGNFDLEGLERGIEEVGPNNVPYIVATITSNSAGGQPVSLANLKAMYSIAKKYDIPVVMDSARFAENAYFIKQREAEYKDWTIEQITRETYKYADMLAMSAKKDAMVPMGGLLCMKDDSFFDVYTECRTLCVVQEGFPTYGGLEGGAMERLAVGLYDGMNLDWLAYRIAQVQYLVDGLEEIDVVCQQAGGHAAFVDAGKLLPHIPADQFPAQALACELYKVAGIRAVEIGSFLLGRDPKTGKQLPCPAELLRLTIPRATYTQTHMDFIIEAFKHVKENAANIKGLTFTYEPKVLRHFTAKLKEV.

Residues lysine 5, lysine 115, and lysine 156 each carry the N6-acetyllysine modification. The residue at position 270 (lysine 270) is an N6-(pyridoxal phosphate)lysine. Lysine 450 carries the post-translational modification N6-acetyllysine.

This sequence belongs to the beta-eliminating lyase family. Homotetramer. The cofactor is pyridoxal 5'-phosphate.

It catalyses the reaction L-tryptophan + H2O = indole + pyruvate + NH4(+). Its pathway is amino-acid degradation; L-tryptophan degradation via pyruvate pathway; indole and pyruvate from L-tryptophan: step 1/1. In Escherichia coli O9:H4 (strain HS), this protein is Tryptophanase.